The primary structure comprises 244 residues: Tyrosine recombinase XerD-like (244 aa).

The Core-binding (CB) domain occupies 1-73 (MRDRISAFLE…ACNQFLYFLY (73 aa)). The region spanning 90–244 (AEKKTEKPEI…KTVLTLEKYR (155 aa)) is the Tyr recombinase domain. Catalysis depends on residues Lys150 and Arg211. Tyr243 (O-(3'-phospho-DNA)-tyrosine intermediate) is an active-site residue.

It belongs to the 'phage' integrase family. XerD-like subfamily.

The protein localises to the cytoplasm. In terms of biological role, putative tyrosine recombinase. Not involved in the cutting and rejoining of the recombining DNA molecules on dif(SL) site. The protein is Tyrosine recombinase XerD-like of Streptococcus pneumoniae (strain Hungary19A-6).